We begin with the raw amino-acid sequence, 259 residues long: Global transcriptional regulator CodY (259 aa).

The interval 1–155 is GAF domain; the sequence is MDLLSKTRRI…GATVVGMEIL (155 aa). A DNA-binding region (H-T-H motif) is located at residues 203-222; that stretch reads ASKIADRVGITRSVIVNALR.

The protein belongs to the CodY family.

Its subcellular location is the cytoplasm. In terms of biological role, DNA-binding global transcriptional regulator which is involved in the adaptive response to starvation and acts by directly or indirectly controlling the expression of numerous genes in response to nutrient availability. During rapid exponential growth, CodY is highly active and represses genes whose products allow adaptation to nutrient depletion. This is Global transcriptional regulator CodY from Brevibacillus brevis (strain 47 / JCM 6285 / NBRC 100599).